The following is a 131-amino-acid chain: Small ribosomal subunit protein uS11 (131 aa).

This sequence belongs to the universal ribosomal protein uS11 family. As to quaternary structure, part of the 30S ribosomal subunit. Interacts with proteins S7 and S18. Binds to IF-3.

Its function is as follows. Located on the platform of the 30S subunit, it bridges several disparate RNA helices of the 16S rRNA. Forms part of the Shine-Dalgarno cleft in the 70S ribosome. In Geobacter sulfurreducens (strain ATCC 51573 / DSM 12127 / PCA), this protein is Small ribosomal subunit protein uS11.